A 244-amino-acid chain; its full sequence is Histone H1, orphon (244 aa).

Low complexity predominate over residues 1-21 (MSDPAPEIEAPVEAAPVASPP). Disordered stretches follow at residues 1–59 (MSDP…PVSE) and 113–244 (QAKG…KKAK). A compositionally biased stretch (basic and acidic residues) spans 35–45 (PKAEKPKSDKP). In terms of domain architecture, H15 spans 53-127 (THPPVSEMVV…GASGSFKLPP (75 aa)). The span at 186-203 (AKPASKKAAAPKPKAAKP) shows a compositional bias: low complexity. Residues 213–244 (ATKAAAKKPVAKPVAKKPAAKPAKKPAAKKAK) show a composition bias toward basic residues.

Belongs to the histone H1/H5 family.

The protein localises to the nucleus. The protein resides in the chromosome. Functionally, histones H1 are necessary for the condensation of nucleosome chains into higher-order structures. This Chironomus thummi thummi (Midge) protein is Histone H1, orphon.